A 115-amino-acid chain; its full sequence is NADH-ubiquinone oxidoreductase chain 3 (115 aa).

Helical transmembrane passes span 4 to 24, 55 to 75, and 87 to 107; these read LLAM…AFWL, FFLV…LLPI, and MMLT…YEWI.

The protein belongs to the complex I subunit 3 family. In terms of assembly, core subunit of respiratory chain NADH dehydrogenase (Complex I) which is composed of 45 different subunits. Interacts with TMEM186. Interacts with TMEM242.

The protein localises to the mitochondrion inner membrane. The catalysed reaction is a ubiquinone + NADH + 5 H(+)(in) = a ubiquinol + NAD(+) + 4 H(+)(out). Core subunit of the mitochondrial membrane respiratory chain NADH dehydrogenase (Complex I) which catalyzes electron transfer from NADH through the respiratory chain, using ubiquinone as an electron acceptor. Essential for the catalytic activity of complex I. The sequence is that of NADH-ubiquinone oxidoreductase chain 3 from Neotoma floridana (Eastern woodrat).